A 657-amino-acid polypeptide reads, in one-letter code: Probable cytochrome P450 556A1 (657 aa).

Residues 2–24 (FLTSILYTIIIILIFYKGLEYLI) form a helical membrane-spanning segment. The interval 440–486 (RSLPSINNNNNNNNNNNNNNNNNNNNNNNNNSNNNSINGNNKNNNRN) is disordered. Over residues 446–486 (NNNNNNNNNNNNNNNNNNNNNNNNNSNNNSINGNNKNNNRN) the composition is skewed to low complexity. Heme is bound at residue Cys587.

This sequence belongs to the cytochrome P450 family. It depends on heme as a cofactor.

The protein resides in the membrane. The protein is Probable cytochrome P450 556A1 (cyp556A1) of Dictyostelium discoideum (Social amoeba).